The following is a 153-amino-acid chain: Ribosome maturation factor RimP (153 aa).

The protein belongs to the RimP family.

The protein localises to the cytoplasm. Required for maturation of 30S ribosomal subunits. The chain is Ribosome maturation factor RimP from Vesicomyosocius okutanii subsp. Calyptogena okutanii (strain HA).